We begin with the raw amino-acid sequence, 78 residues long: Small ribosomal subunit protein uS15 (78 aa).

Belongs to the universal ribosomal protein uS15 family. In terms of assembly, part of the 30S ribosomal subunit. Forms a bridge to the 50S subunit in the 70S ribosome, contacting the 23S rRNA.

Its function is as follows. One of the primary rRNA binding proteins, it binds directly to 16S rRNA where it helps nucleate assembly of the platform of the 30S subunit by binding and bridging several RNA helices of the 16S rRNA. In terms of biological role, forms an intersubunit bridge (bridge B4) with the 23S rRNA of the 50S subunit in the ribosome. In Karelsulcia muelleri (strain GWSS) (Sulcia muelleri), this protein is Small ribosomal subunit protein uS15.